We begin with the raw amino-acid sequence, 191 residues long: Peptidyl-tRNA hydrolase (191 aa).

Tyr-14 is a binding site for tRNA. His-19 (proton acceptor) is an active-site residue. TRNA contacts are provided by Tyr-64, Asn-66, and Asn-112.

This sequence belongs to the PTH family. Monomer.

Its subcellular location is the cytoplasm. It catalyses the reaction an N-acyl-L-alpha-aminoacyl-tRNA + H2O = an N-acyl-L-amino acid + a tRNA + H(+). Hydrolyzes ribosome-free peptidyl-tRNAs (with 1 or more amino acids incorporated), which drop off the ribosome during protein synthesis, or as a result of ribosome stalling. In terms of biological role, catalyzes the release of premature peptidyl moieties from peptidyl-tRNA molecules trapped in stalled 50S ribosomal subunits, and thus maintains levels of free tRNAs and 50S ribosomes. This chain is Peptidyl-tRNA hydrolase, found in Syntrophotalea carbinolica (strain DSM 2380 / NBRC 103641 / GraBd1) (Pelobacter carbinolicus).